The sequence spans 364 residues: Chorismate synthase (364 aa).

R47 and R53 together coordinate NADP(+). FMN-binding positions include R124–S126, G286, K301–T305, and R327.

Belongs to the chorismate synthase family. In terms of assembly, homotetramer. The cofactor is FMNH2.

It catalyses the reaction 5-O-(1-carboxyvinyl)-3-phosphoshikimate = chorismate + phosphate. It functions in the pathway metabolic intermediate biosynthesis; chorismate biosynthesis; chorismate from D-erythrose 4-phosphate and phosphoenolpyruvate: step 7/7. Functionally, catalyzes the anti-1,4-elimination of the C-3 phosphate and the C-6 proR hydrogen from 5-enolpyruvylshikimate-3-phosphate (EPSP) to yield chorismate, which is the branch point compound that serves as the starting substrate for the three terminal pathways of aromatic amino acid biosynthesis. This reaction introduces a second double bond into the aromatic ring system. This is Chorismate synthase from Acaryochloris marina (strain MBIC 11017).